A 299-amino-acid chain; its full sequence is Bifunctional protein FolD 1 (299 aa).

Residues 168 to 170 (GRS), serine 193, and isoleucine 234 contribute to the NADP(+) site.

The protein belongs to the tetrahydrofolate dehydrogenase/cyclohydrolase family. In terms of assembly, homodimer.

It catalyses the reaction (6R)-5,10-methylene-5,6,7,8-tetrahydrofolate + NADP(+) = (6R)-5,10-methenyltetrahydrofolate + NADPH. The catalysed reaction is (6R)-5,10-methenyltetrahydrofolate + H2O = (6R)-10-formyltetrahydrofolate + H(+). It functions in the pathway one-carbon metabolism; tetrahydrofolate interconversion. In terms of biological role, catalyzes the oxidation of 5,10-methylenetetrahydrofolate to 5,10-methenyltetrahydrofolate and then the hydrolysis of 5,10-methenyltetrahydrofolate to 10-formyltetrahydrofolate. In Rhizobium etli (strain ATCC 51251 / DSM 11541 / JCM 21823 / NBRC 15573 / CFN 42), this protein is Bifunctional protein FolD 1.